The chain runs to 325 residues: Adenine deaminase (325 aa).

H11, H13, and H189 together coordinate Zn(2+). Residue E192 is the Proton donor of the active site. D270 contacts Zn(2+). D271 serves as a coordination point for substrate.

Belongs to the metallo-dependent hydrolases superfamily. Adenosine and AMP deaminases family. Adenine deaminase type 2 subfamily. The cofactor is Zn(2+).

The enzyme catalyses adenine + H2O + H(+) = hypoxanthine + NH4(+). Functionally, catalyzes the hydrolytic deamination of adenine to hypoxanthine. Plays an important role in the purine salvage pathway and in nitrogen catabolism. The chain is Adenine deaminase from Agrobacterium fabrum (strain C58 / ATCC 33970) (Agrobacterium tumefaciens (strain C58)).